A 273-amino-acid chain; its full sequence is Beta-lactamase OXA-133 (273 aa).

Positions 1–17 (MNKYFTCYVVASLFFSG) are cleaved as a signal peptide. Cys-18 carries the N-palmitoyl cysteine lipid modification. The S-diacylglycerol cysteine moiety is linked to residue Cys-18. Ser-79 acts as the Acyl-ester intermediate in catalysis. Lys-82 carries the N6-carboxylysine modification. Residue 216-218 (KTG) coordinates substrate.

Belongs to the class-D beta-lactamase family.

It is found in the cell membrane. The catalysed reaction is a beta-lactam + H2O = a substituted beta-amino acid. In terms of biological role, catalyzes the hydrolysis of beta-lactam antibiotics. This is Beta-lactamase OXA-133 from Acinetobacter radioresistens.